Consider the following 372-residue polypeptide: High-affinity lysophosphatidic acid receptor (372 aa).

Residues 1–38 (MGCNNTALDNCMLPNLSIATAPLDLRFAFSTPLRMLLA) lie on the Extracellular side of the membrane. N-linked (GlcNAc...) asparagine glycosylation is found at N4 and N15. Residues 39-59 (IIMILMIAIAFLGNAIVCLIV) traverse the membrane as a helical segment. At 60 to 80 (YQKPAMRSAINLLLATLAFSD) the chain is on the cytoplasmic side. Residues 81 to 101 (IMLSLFCMPFTAVTIITGSWL) form a helical membrane-spanning segment. The Extracellular portion of the chain corresponds to 102–108 (FGTQFCQ). The chain crosses the membrane as a helical span at residues 109–129 (ISAMLYWFFVLEGVAILLIIS). Residues 130 to 149 (VDRFLIIVQRQDKLNPHRAK) lie on the Cytoplasmic side of the membrane. The helical transmembrane segment at 150–170 (IMIAASWVLSFCISLPSVVGW) threads the bilayer. At 171-198 (TLVEVPTRAPQCVLGYTEFSADRVYAVM) the chain is on the extracellular side. The helical transmembrane segment at 199-219 (LIVAVFFIPFSVMLYSYLCIL) threads the bilayer. Residues 220–268 (NTVRRNAVRIHTHADSLCLSQVSKLGLMGLQRPHQMNVDMSFKTRAFTT) lie on the Cytoplasmic side of the membrane. The chain crosses the membrane as a helical span at residues 269 to 289 (ILILFIGFSLCWLPHSVFSLL). Residues 290-301 (SVFSRTFYYSSS) lie on the Extracellular side of the membrane. Residues 302-324 (FYSISTCTLWLTYLKSVFNPVIY) traverse the membrane as a helical segment. The Cytoplasmic portion of the chain corresponds to 325–372 (CWRIKKFREACLEFMPKTFKILPNVRGRTRRRIRPSTIYVCGEHQSAV).

The protein belongs to the G-protein coupled receptor 1 family. As to expression, ubiquitously expressed.

The protein localises to the cell membrane. Functionally, highly selective receptor for lysophosphatidic acid (LPA), a mediator of diverse cellular activities. This is High-affinity lysophosphatidic acid receptor from Xenopus laevis (African clawed frog).